A 381-amino-acid polypeptide reads, in one-letter code: MQTSIILGTGRFQAIRRLSARVRRLWYSAPETLRGGPLLSAIKLTSMTYRAGFEMDRRRSRFRRRRLPAYVVSVGNLAVGGTGKTPLTLWLARYFKNGGRRVAVLSRGYGRSGSAPGRVPSSGELSVLALEYGDEPAMLALELGDTPVYVGKHRWESGILAIESSRADLVILDDGFQHHALERDLDLVLLDASNPFGNGFTLPLGPLREPKAHLARAHAIVLTRAVEPESVARTRAQLDKAFPDKPVFAAQHILRGFHAGLGGAVVPLRSMVARPAVAFAGIADPKSFFSLLEALEIDLRMAFAFPDHHRPTARDTAALFDAVRACSADLLITTQKDAVRLPGFLRRVVCVPDLEIDFGEDETRFRRFLDRETRGRQAMPE.

Residue 78 to 85 (AVGGTGKT) coordinates ATP.

It belongs to the LpxK family.

The enzyme catalyses a lipid A disaccharide + ATP = a lipid IVA + ADP + H(+). It participates in glycolipid biosynthesis; lipid IV(A) biosynthesis; lipid IV(A) from (3R)-3-hydroxytetradecanoyl-[acyl-carrier-protein] and UDP-N-acetyl-alpha-D-glucosamine: step 6/6. In terms of biological role, transfers the gamma-phosphate of ATP to the 4'-position of a tetraacyldisaccharide 1-phosphate intermediate (termed DS-1-P) to form tetraacyldisaccharide 1,4'-bis-phosphate (lipid IVA). This is Tetraacyldisaccharide 4'-kinase from Syntrophobacter fumaroxidans (strain DSM 10017 / MPOB).